We begin with the raw amino-acid sequence, 147 residues long: Cysteine proteinase inhibitor 2 (147 aa).

The first 27 residues, 1 to 27 (MATMLKVSLVLSLLGFLVIAVVTPSAA), serve as a signal peptide directing secretion. In terms of domain architecture, Cystatin spans 87–117 (LQFSRVVSAQKQVVAGLKYYLRIEVTQPNGS). Residues 98 to 102 (QVVAG) carry the Secondary area of contact motif. Residue Asn-115 is glycosylated (N-linked (GlcNAc...) asparagine).

It belongs to the cystatin family. Phytocystatin subfamily.

The protein localises to the secreted. In terms of biological role, specific inhibitor of cysteine proteinases. Probably involved in the regulation of endogenous processes and in defense against pests and pathogens. The sequence is that of Cysteine proteinase inhibitor 2 (CYS2) from Arabidopsis thaliana (Mouse-ear cress).